The sequence spans 877 residues: Alpha-glucosidase (877 aa).

The first 23 residues, 1-23 (MATVGVLLLCLCLCLFAPRLCSS), serve as a signal peptide directing secretion. The segment at 89 to 115 (VPQDIIPRPAPGDVLHDAPPASSAPLQ) is disordered. Residues Asn-191, Asn-298, Asn-338, and Asn-391 are each glycosylated (N-linked (GlcNAc...) asparagine). Residues Asp-437 and Glu-440 contribute to the active site. N-linked (GlcNAc...) asparagine glycosylation occurs at Asn-471. Catalysis depends on Asp-534, which acts as the Proton donor. Asn-570 is a glycosylation site (N-linked (GlcNAc...) asparagine).

Belongs to the glycosyl hydrolase 31 family. In terms of tissue distribution, high levels seen in the aleurone and scutellum after germination, while low levels are found in developing seeds.

It carries out the reaction Hydrolysis of terminal, non-reducing (1-&gt;4)-linked alpha-D-glucose residues with release of alpha-D-glucose.. In Hordeum vulgare (Barley), this protein is Alpha-glucosidase.